Here is a 161-residue protein sequence, read N- to C-terminus: Epithelial membrane protein 2 (161 aa).

4 helical membrane passes run 1-21 (MLVILAFIILFHITSAILLFI), 67-87 (TMILATILCCVGFFVFILQLF), 95-115 (FVFTAIIQLLSAFCVMTGASI), and 137-157 (FVVAWVAFPMTLLSGLMYLVL).

Belongs to the PMP-22/EMP/MP20 family. Expressed in the arches, orbits, pectoral fins, vessels, pronephric renal tubules, and glomeruli.

It is found in the golgi apparatus membrane. It localises to the cell membrane. The protein resides in the apical cell membrane. Its subcellular location is the membrane raft. The protein localises to the cytoplasm. It is found in the nucleus. It localises to the perinuclear region. In terms of biological role, functions as a key regulator of cell membrane composition by regulating protein surface expression. Also, plays a role in regulation of processes including cell migration, cell proliferation, cell contraction and cell adhesion. May play a role in glomerular filtration. This is Epithelial membrane protein 2 (emp2) from Danio rerio (Zebrafish).